We begin with the raw amino-acid sequence, 398 residues long: Isopenicillin N epimerase (398 aa).

At Lys-217 the chain carries N6-(pyridoxal phosphate)lysine.

It belongs to the class-V pyridoxal-phosphate-dependent aminotransferase family. It depends on pyridoxal 5'-phosphate as a cofactor.

The enzyme catalyses isopenicillin N = penicillin N. It participates in antibiotic biosynthesis; cephalosporin C biosynthesis. Catalyzes the reversible isomerization between isopenicillin N and penicillin N. This Streptomyces clavuligerus protein is Isopenicillin N epimerase (cefD).